Here is a 101-residue protein sequence, read N- to C-terminus: Small ribosomal subunit protein bS6 (101 aa).

The protein belongs to the bacterial ribosomal protein bS6 family.

Binds together with bS18 to 16S ribosomal RNA. The protein is Small ribosomal subunit protein bS6 of Nitratidesulfovibrio vulgaris (strain DSM 19637 / Miyazaki F) (Desulfovibrio vulgaris).